The sequence spans 559 residues: Formate--tetrahydrofolate ligase (559 aa).

67–74 (TPAGEGKS) provides a ligand contact to ATP.

It belongs to the formate--tetrahydrofolate ligase family.

It carries out the reaction (6S)-5,6,7,8-tetrahydrofolate + formate + ATP = (6R)-10-formyltetrahydrofolate + ADP + phosphate. The protein operates within one-carbon metabolism; tetrahydrofolate interconversion. This is Formate--tetrahydrofolate ligase from Lactobacillus delbrueckii subsp. bulgaricus (strain ATCC BAA-365 / Lb-18).